A 272-amino-acid chain; its full sequence is Dermonecrotic toxin StSicTox-betaIC1 (272 aa).

Histidine 5 is a catalytic residue. Mg(2+) is bound by residues glutamate 25 and aspartate 27. The Nucleophile role is filled by histidine 41. Cystine bridges form between cysteine 45–cysteine 51 and cysteine 47–cysteine 191. Position 85 (aspartate 85) interacts with Mg(2+).

Belongs to the arthropod phospholipase D family. Class II subfamily. Class IIb sub-subfamily. The cofactor is Mg(2+). As to expression, expressed by the venom gland.

It localises to the secreted. The enzyme catalyses an N-(acyl)-sphingosylphosphocholine = an N-(acyl)-sphingosyl-1,3-cyclic phosphate + choline. The catalysed reaction is N-hexanoyl-sphing-4-enine-1-phosphocholine = N-(hexanoyl)-sphing-4-enine-1,3-cyclic phosphate + choline. It catalyses the reaction an N-(acyl)-sphingosylphosphoethanolamine = an N-(acyl)-sphingosyl-1,3-cyclic phosphate + ethanolamine. It carries out the reaction N-dodecanoyl-heptadecasphing-4-enine-1-phosphoethanolamine = N-dodecanoyl-heptadecasphing-4-enine-1,3-cyclic phosphate + ethanolamine. The enzyme catalyses a 1-acyl-sn-glycero-3-phosphoethanolamine = a 1-acyl-sn-glycero-2,3-cyclic phosphate + ethanolamine. The catalysed reaction is 1-tetradecanoyl-sn-glycero-3-phosphoethanolamine = 1-tetradecanoyl-sn-glycero-2,3-cyclic phosphate + ethanolamine. Dermonecrotic toxins cleave the phosphodiester linkage between the phosphate and headgroup of certain phospholipids (sphingolipid and lysolipid substrates), forming an alcohol (often choline) and a cyclic phosphate. This toxin acts on lysophosphatidylethanolamine (LPE) and ceramide phosphoethanolamine (CPE) with high activity. This toxin acts on sphingomyelin (SM) with very low activity and is not active on lysophosphatidylserine (LPS), lysophosphatidylcholine (LPC) and lysophosphatidylglycerol (LPG). It acts by transphosphatidylation, releasing exclusively cyclic phosphate as second products. It is not surprising that spider toxins have affinity for ethanolamine-containing sphingolipids since they are common in insect prey. Induces dermonecrosis, hemolysis, increased vascular permeability, edema, inflammatory response, and platelet aggregation. This Sicarius terrosus (Cave spider) protein is Dermonecrotic toxin StSicTox-betaIC1.